We begin with the raw amino-acid sequence, 21 residues long: FINTIKLLIEKYREWKNKQSS.

Ser-21 bears the Serine amide mark.

Expressed by the venom gland.

It localises to the secreted. In Cupiennius salei (American wandering spider), this protein is Cupiennin-6d.